The primary structure comprises 330 residues: Pantothenate synthetase 2 (330 aa).

H55 serves as the catalytic Proton donor. ATP-binding positions include 167–170, V196, and 204–207; these read GEKD and ASSR.

Belongs to the pantothenate synthetase family. In terms of assembly, homodimer.

Its subcellular location is the cytoplasm. The catalysed reaction is (R)-pantoate + beta-alanine + ATP = (R)-pantothenate + AMP + diphosphate + H(+). It participates in cofactor biosynthesis; (R)-pantothenate biosynthesis; (R)-pantothenate from (R)-pantoate and beta-alanine: step 1/1. In terms of biological role, catalyzes the condensation of pantoate with beta-alanine in an ATP-dependent reaction via a pantoyl-adenylate intermediate. The sequence is that of Pantothenate synthetase 2 from Frankia alni (strain DSM 45986 / CECT 9034 / ACN14a).